The following is a 250-amino-acid chain: Probable aquaporin TIP-type (250 aa).

Transmembrane regions (helical) follow at residues 20–42 (AYVA…AIAY) and 55–77 (GLVA…AANV). The short motif at 83–85 (NPA) is the NPA 1 element. The next 3 membrane-spanning stretches (helical) occupy residues 97–119 (TILT…CLLL), 140–162 (IQGV…ATAA), and 172–194 (IAPI…FSGG). The short motif at 197-199 (NPA) is the NPA 2 element. Residues 215–237 (WIYWAGPLIGGALAGFIYGDVFI) form a helical membrane-spanning segment.

This sequence belongs to the MIP/aquaporin (TC 1.A.8) family. TIP (TC 1.A.8.10) subfamily. In terms of tissue distribution, expressed in mature seeds and dark-grown seedlings.

It localises to the vacuole membrane. Its function is as follows. Channel protein in tonoplast. These proteins may allow the diffusion of amino acids and/or peptides from the vacuolar compartment to the cytoplasm. This Antirrhinum majus (Garden snapdragon) protein is Probable aquaporin TIP-type (DIP).